The chain runs to 472 residues: Lycopene beta cyclase, chloroplastic (472 aa).

The transit peptide at 1–25 directs the protein to the chloroplast; it reads MDALLTSPFIPLKKPSHNRKSNTTT. The interval 1–27 is disordered; the sequence is MDALLTSPFIPLKKPSHNRKSNTTTAS. Residue 62-90 coordinates NAD(+); sequence LAVVGGGPAGLAVAKRVSDAGLSVCSIDP.

It belongs to the lycopene cyclase family. Expressed in flower buds and lips. Detected in roots and leaves.

Its subcellular location is the plastid. It localises to the chloroplast. It carries out the reaction a carotenoid psi-end group = a carotenoid beta-end derivative. Its pathway is carotenoid biosynthesis; beta-carotene biosynthesis. It participates in carotenoid biosynthesis; beta-zeacarotene biosynthesis. Catalyzes the double cyclization reaction which converts lycopene to beta-carotene and neurosporene to beta-zeacarotene. The polypeptide is Lycopene beta cyclase, chloroplastic (LCY-B) (Oncidium hybrid cultivar (Orchid)).